The primary structure comprises 204 residues: Thymidylate kinase (204 aa).

11-18 (GLDKSGKT) is an ATP binding site.

It belongs to the thymidylate kinase family.

It carries out the reaction dTMP + ATP = dTDP + ADP. It participates in pyrimidine metabolism; dTTP biosynthesis. This is Thymidylate kinase (TMK) from Cowpox virus (strain GRI-90 / Grishak) (CPV).